Reading from the N-terminus, the 248-residue chain is 3-deoxy-manno-octulosonate cytidylyltransferase (248 aa).

The protein belongs to the KdsB family.

Its subcellular location is the cytoplasm. It carries out the reaction 3-deoxy-alpha-D-manno-oct-2-ulosonate + CTP = CMP-3-deoxy-beta-D-manno-octulosonate + diphosphate. Its pathway is nucleotide-sugar biosynthesis; CMP-3-deoxy-D-manno-octulosonate biosynthesis; CMP-3-deoxy-D-manno-octulosonate from 3-deoxy-D-manno-octulosonate and CTP: step 1/1. It participates in bacterial outer membrane biogenesis; lipopolysaccharide biosynthesis. Functionally, activates KDO (a required 8-carbon sugar) for incorporation into bacterial lipopolysaccharide in Gram-negative bacteria. This Citrobacter koseri (strain ATCC BAA-895 / CDC 4225-83 / SGSC4696) protein is 3-deoxy-manno-octulosonate cytidylyltransferase.